We begin with the raw amino-acid sequence, 468 residues long: Factor XIIa inhibitor (468 aa).

The first 23 residues, 1–23 (MASRLTPLTLLLLLLLAGDRVTS), serve as a signal peptide directing secretion. The interval 27–60 (VGPGNLQEGESEGDSQKGGILDGESIQGNEDSPT) is disordered. Residues Asn-65, Asn-176, Asn-227, and Asn-326 are each glycosylated (N-linked (GlcNAc...) asparagine). 2 disulfides stabilise this stretch: Cys-97–Cys-396 and Cys-104–Cys-179.

This sequence belongs to the serpin family. In terms of processing, N- and O-glycosylated.

The protein localises to the secreted. In terms of biological role, may play a potentially crucial role in regulating important physiological pathways including complement activation, blood coagulation, fibrinolysis and the generation of kinins. The sequence is that of Factor XIIa inhibitor from Bos taurus (Bovine).